The chain runs to 142 residues: FAD synthase (142 aa).

ATP contacts are provided by residues 9–10, 14–17, Asp-93, and Tyr-120; these read VF and HLGH.

This sequence belongs to the archaeal FAD synthase family. Homodimer. It depends on a divalent metal cation as a cofactor.

It catalyses the reaction FMN + ATP + H(+) = FAD + diphosphate. Its pathway is cofactor biosynthesis; FAD biosynthesis; FAD from FMN: step 1/1. Functionally, catalyzes the transfer of the AMP portion of ATP to flavin mononucleotide (FMN) to produce flavin adenine dinucleotide (FAD) coenzyme. This chain is FAD synthase (ribL), found in Thermoplasma volcanium (strain ATCC 51530 / DSM 4299 / JCM 9571 / NBRC 15438 / GSS1).